Reading from the N-terminus, the 397-residue chain is MQVYLVGGAVRDALLNRKVIERDYVVVGATPQEMLSQGFTQVGKDFPVFLHPKTQEEYALARTERKSGKGYTGFVCDASSSVTLEEDLLRRDLTVNAIAQDNLGNLIDPYGGKKDLENHLLRHVSEAFSEDPLRVFRVARFATRYAYLGFTIANETMALMQSMAESGELSTLSAERVWQETKRSLLEKTPHVFFTVLNQAHGLNDWFAELESNLDAAIATLKTAVALENAAKENFDKSGQLENKPLETKIPESSSSGTTTLIIRFTALLAHLNEEEAKRLCNRLKVQNQLSEIVILACKFKDFLLNTQNSPADLLALFNGCDAWRRSERFTLLLKAFAPYAHYKDLDWQRQQEHIENALSAANQVNVQDIIATGVKGPAIKEALNQAKLDAIASIGE.

Glycine 8 and arginine 11 together coordinate ATP. Glycine 8 and arginine 11 together coordinate CTP. 2 residues coordinate Mg(2+): glutamate 21 and aspartate 23. Arginine 91, arginine 137, and arginine 140 together coordinate ATP. The CTP site is built by arginine 91, arginine 137, and arginine 140. An HD domain is found at 213–324 (NLDAAIATLK…LALFNGCDAW (112 aa)).

Belongs to the tRNA nucleotidyltransferase/poly(A) polymerase family. Bacterial CCA-adding enzyme type 2 subfamily. Mg(2+) serves as cofactor.

The enzyme catalyses a tRNA precursor + 2 CTP + ATP = a tRNA with a 3' CCA end + 3 diphosphate. The catalysed reaction is a tRNA with a 3' CCA end + 2 CTP + ATP = a tRNA with a 3' CCACCA end + 3 diphosphate. Catalyzes the addition and repair of the essential 3'-terminal CCA sequence in tRNAs without using a nucleic acid template. Adds these three nucleotides in the order of C, C, and A to the tRNA nucleotide-73, using CTP and ATP as substrates and producing inorganic pyrophosphate. tRNA 3'-terminal CCA addition is required both for tRNA processing and repair. Also involved in tRNA surveillance by mediating tandem CCA addition to generate a CCACCA at the 3' terminus of unstable tRNAs. While stable tRNAs receive only 3'-terminal CCA, unstable tRNAs are marked with CCACCA and rapidly degraded. The sequence is that of CCA-adding enzyme from Alteromonas mediterranea (strain DSM 17117 / CIP 110805 / LMG 28347 / Deep ecotype).